Consider the following 451-residue polypeptide: Signal recognition particle protein (451 aa).

Residues 107–114 (GLQGSGKT), 190–194 (DTAGR), and 248–251 (TKTD) each bind GTP.

Belongs to the GTP-binding SRP family. SRP54 subfamily. As to quaternary structure, part of the signal recognition particle protein translocation system, which is composed of SRP and FtsY. SRP is a ribonucleoprotein composed of Ffh and a 4.5S RNA molecule.

It is found in the cytoplasm. It catalyses the reaction GTP + H2O = GDP + phosphate + H(+). Its function is as follows. Involved in targeting and insertion of nascent membrane proteins into the cytoplasmic membrane. Binds to the hydrophobic signal sequence of the ribosome-nascent chain (RNC) as it emerges from the ribosomes. The SRP-RNC complex is then targeted to the cytoplasmic membrane where it interacts with the SRP receptor FtsY. Interaction with FtsY leads to the transfer of the RNC complex to the Sec translocase for insertion into the membrane, the hydrolysis of GTP by both Ffh and FtsY, and the dissociation of the SRP-FtsY complex into the individual components. In Buchnera aphidicola subsp. Acyrthosiphon pisum (strain APS) (Acyrthosiphon pisum symbiotic bacterium), this protein is Signal recognition particle protein.